Consider the following 192-residue polypeptide: Phosphoheptose isomerase (192 aa).

In terms of domain architecture, SIS spans 37 to 192; the sequence is LADSFKAGGK…IQLIEKEMVK (156 aa). Residue 52-54 participates in substrate binding; the sequence is NGG. Residues histidine 61 and glutamate 65 each contribute to the Zn(2+) site. Residues glutamate 65, 93 to 94, 119 to 121, serine 124, and glutamine 172 each bind substrate; these read ND and STS. Residues glutamine 172 and histidine 180 each contribute to the Zn(2+) site.

The protein belongs to the SIS family. GmhA subfamily. Homotetramer. Zn(2+) is required as a cofactor.

The protein resides in the cytoplasm. The enzyme catalyses 2 D-sedoheptulose 7-phosphate = D-glycero-alpha-D-manno-heptose 7-phosphate + D-glycero-beta-D-manno-heptose 7-phosphate. The protein operates within carbohydrate biosynthesis; D-glycero-D-manno-heptose 7-phosphate biosynthesis; D-glycero-alpha-D-manno-heptose 7-phosphate and D-glycero-beta-D-manno-heptose 7-phosphate from sedoheptulose 7-phosphate: step 1/1. Catalyzes the isomerization of sedoheptulose 7-phosphate in D-glycero-D-manno-heptose 7-phosphate. The sequence is that of Phosphoheptose isomerase from Escherichia coli O139:H28 (strain E24377A / ETEC).